Reading from the N-terminus, the 431-residue chain is UPF0597 protein TDE_2144 (431 aa).

This sequence belongs to the UPF0597 family.

This Treponema denticola (strain ATCC 35405 / DSM 14222 / CIP 103919 / JCM 8153 / KCTC 15104) protein is UPF0597 protein TDE_2144.